The chain runs to 536 residues: Protoporphyrinogen oxidase, chloroplastic (536 aa).

A chloroplast-targeting transit peptide spans 1–36 (MAAAAAAMATATSATAAPPLRIRDAARRTRRRGHVR). FAD contacts are provided by residues 62–67 (GGGISG), 87–88 (EA), and 111–114 (GPNS). A disordered region spans residues 248-272 (TIKTIQERGKNPKPPRDPRLPTPKG). The span at 252-266 (IQERGKNPKPPRDPR) shows a compositional bias: basic and acidic residues. 510–512 (VAL) contacts FAD.

This sequence belongs to the protoporphyrinogen/coproporphyrinogen oxidase family. Protoporphyrinogen oxidase subfamily. FAD serves as cofactor.

The protein localises to the plastid. The protein resides in the chloroplast. The enzyme catalyses protoporphyrinogen IX + 3 O2 = protoporphyrin IX + 3 H2O2. The protein operates within porphyrin-containing compound metabolism; protoporphyrin-IX biosynthesis; protoporphyrin-IX from protoporphyrinogen-IX: step 1/1. It functions in the pathway porphyrin-containing compound metabolism; chlorophyll biosynthesis. Catalyzes the 6-electron oxidation of protoporphyrinogen-IX to form protoporphyrin-IX. The chain is Protoporphyrinogen oxidase, chloroplastic (PPOX1) from Oryza sativa subsp. japonica (Rice).